The primary structure comprises 79 residues: MORN repeat-containing protein 2 (79 aa).

2 MORN repeats span residues 15–36 (YEGQ…PNGA) and 38–55 (YTGN…EYTD).

It is found in the cytoplasmic vesicle. The protein resides in the secretory vesicle. Its subcellular location is the acrosome. The protein localises to the nucleus. Its function is as follows. Might have a role in spermatogenesis. In Homo sapiens (Human), this protein is MORN repeat-containing protein 2.